The sequence spans 388 residues: Succinate--CoA ligase [ADP-forming] subunit beta (388 aa).

One can recognise an ATP-grasp domain in the interval 9–244; sequence KQLFAEFGLP…PSQEDKREAH (236 aa). ATP is bound by residues Lys46, 53–55, Glu99, Ser102, and Glu107; that span reads GRG. Asn199 and Asp213 together coordinate Mg(2+). Substrate is bound by residues Asn264 and 321 to 323; that span reads GIV.

It belongs to the succinate/malate CoA ligase beta subunit family. As to quaternary structure, heterotetramer of two alpha and two beta subunits. Mg(2+) is required as a cofactor.

The catalysed reaction is succinate + ATP + CoA = succinyl-CoA + ADP + phosphate. The enzyme catalyses GTP + succinate + CoA = succinyl-CoA + GDP + phosphate. The protein operates within carbohydrate metabolism; tricarboxylic acid cycle; succinate from succinyl-CoA (ligase route): step 1/1. Its function is as follows. Succinyl-CoA synthetase functions in the citric acid cycle (TCA), coupling the hydrolysis of succinyl-CoA to the synthesis of either ATP or GTP and thus represents the only step of substrate-level phosphorylation in the TCA. The beta subunit provides nucleotide specificity of the enzyme and binds the substrate succinate, while the binding sites for coenzyme A and phosphate are found in the alpha subunit. In Vibrio vulnificus (strain CMCP6), this protein is Succinate--CoA ligase [ADP-forming] subunit beta.